The following is a 466-amino-acid chain: Alpha-galacturonidase (466 aa).

Val-11–Thr-78 lines the NAD(+) pocket. Asn-157 serves as a coordination point for substrate. Cys-179 serves as a coordination point for Mn(2+). The active-site Proton donor is His-180. Residue His-216 participates in Mn(2+) binding.

It belongs to the glycosyl hydrolase 4 family. In terms of assembly, homotetramer. NAD(+) is required as a cofactor. Mn(2+) serves as cofactor.

The catalysed reaction is [(1-&gt;4)-alpha-D-galacturonosyl](n) + H2O = alpha-D-galacturonate + [(1-&gt;4)-alpha-D-galacturonosyl](n-1). In terms of biological role, alpha-galacturonidase able to catalyze the hydrolysis of the chromogenic substrate p-nitrophenyl-alpha-D-galacturonic acid (pNPalphaGalUA). It is probable that alpha-1,4-di-galacturonate (GalUA(2)) is the naturally occurring substrate. This is Alpha-galacturonidase from Lachnoclostridium phytofermentans (strain ATCC 700394 / DSM 18823 / ISDg) (Clostridium phytofermentans).